Here is a 359-residue protein sequence, read N- to C-terminus: DNA replication and repair protein RecF (359 aa).

ATP is bound at residue 30–37; sequence GPNGSGKT.

This sequence belongs to the RecF family.

It localises to the cytoplasm. Its function is as follows. The RecF protein is involved in DNA metabolism; it is required for DNA replication and normal SOS inducibility. RecF binds preferentially to single-stranded, linear DNA. It also seems to bind ATP. The polypeptide is DNA replication and repair protein RecF (Psychromonas ingrahamii (strain DSM 17664 / CCUG 51855 / 37)).